We begin with the raw amino-acid sequence, 467 residues long: Retinoic acid receptor RXR-alpha (467 aa).

Residues 1–112 (MDTKHFLPLD…MNPVSSTEDI (112 aa)) are disordered. Positions 1–139 (MDTKHFLPLD…GNMASFTKHI (139 aa)) are modulating domain. Lysine 4 participates in a covalent cross-link: Glycyl lysine isopeptide (Lys-Gly) (interchain with G-Cter in SUMO2). Polar residues predominate over residues 11 to 25 (FSTQVNSSSLNSPTG). Serine 22 and serine 28 each carry phosphoserine. Over residues 32–52 (PSLHPSLGPGIGSPLGSPGQL) the composition is skewed to low complexity. Positions 54 to 63 (SPISTLSSPI) are enriched in polar residues. Residues serine 61 and serine 75 each carry the phosphoserine; by MAPK8 and MAPK9 modification. Over residues 83–109 (SVPTTPTLGFGTGSPQLNSPMNPVSST) the composition is skewed to polar residues. Threonine 87 carries the post-translational modification Phosphothreonine; by MAPK8 and MAPK9. A Glycyl lysine isopeptide (Lys-Gly) (interchain with G-Cter in SUMO) cross-link involves residue lysine 113. Position 134 is a phosphoserine (serine 134). Zn(2+) is bound by residues cysteine 140 and cysteine 143. An NR C4-type zinc finger spans residues 140–160 (CAICGDRSSGKHYGVYSCEGC). A DNA-binding region (nuclear receptor) is located at residues 140–205 (CAICGDRSSG…RYQKCLAMGM (66 aa)). N6-acetyllysine is present on lysine 150. Residues cysteine 157 and cysteine 160 each contribute to the Zn(2+) site. Positions 165–170 (KRTVRK) are nuclear localization signal. Zn(2+) is bound by residues cysteine 176, cysteine 182, cysteine 192, and cysteine 195. The NR C4-type zinc-finger motif lies at 176–200 (CRDNKDCLIDKRQRNRCQYCRYQKC). The tract at residues 206-229 (KREAVQEERQRGKDRNENEVESTS) is hinge. A compositionally biased stretch (basic and acidic residues) spans 211–223 (QEERQRGKDRNEN). Residues 211-233 (QEERQRGKDRNENEVESTSSANE) form a disordered region. The NR LBD domain maps to 232-463 (NEDMPVEKIL…TFLMEMLEAP (232 aa)). Residue serine 264 is modified to Phosphoserine. At serine 265 the chain carries Phosphoserine; by MAPK8 and MAPK9. The 9-cis-retinoate site is built by arginine 321 and alanine 332. Arginine 321 and alanine 332 together coordinate all-trans-retinoate. Residues 353–373 (RVLTELVSKMRDMQMDKTELG) form a required for nuclear export region.

It belongs to the nuclear hormone receptor family. NR2 subfamily. In terms of assembly, homodimer. Heterodimer with RARA; required for ligand-dependent retinoic acid receptor transcriptional activity. Heterodimer with PPARA (via the leucine-like zipper in the LBD); the interaction is required for PPARA transcriptional activity. Heterodimerizes with PPARG. Heterodimerizes (via NR LBD) with RARB. Heterodimerizes with NR1H4; the heterodimerization enhances the binding affinity for LXXLL motifs from coactivators. Interacts with coactivator NCO6. Interacts with coactivator NCO3. Interacts with coactivator FAM120B. Interacts with coactivator PELP1, SENP6, SFPQ, DNTTIP2 and RNF8. Interacts with PRMT2. Interacts with ASXL1. Interacts with BHLHE40/DEC1, BHLHE41/DEC2, NCOR1 and NCOR2. Interacts in a ligand-dependent fashion with MED1 and NCOA1. Interacts with VDR. Interacts with EP300; the interaction is decreased by 9-cis retinoic acid. Heterodimer (via C-terminus) with NR4A1 (via DNA-binding domain); the interaction is enhanced by 9-cis retinoic acid. NR4A1 competes with EP300 for interaction with RXRA and thereby attenuates EP300 mediated acetylation of RXRA. In the absence of hormonal ligand, interacts with TACC1. Interacts ith IGFBP3. Acetylated by EP300; acetylation enhances DNA binding and transcriptional activity. Post-translationally, phosphorylated on serine and threonine residues mainly in the N-terminal modulating domain. Constitutively phosphorylated on Ser-22 in the presence or absence of ligand. Under stress conditions, hyperphosphorylated by activated JNK on Ser-61, Ser-75, Thr-87 and Ser-265. Phosphorylated on Ser-28, in vitro, by PKA. This phosphorylation is required for repression of cAMP-mediated transcriptional activity of RARA. In terms of processing, ubiquitinated by UBR5, leading to its degradation: UBR5 specifically recognizes and binds ligand-bound RXRA when it is not associated with coactivators (NCOAs). In presence of NCOAs, the UBR5-degron is not accessible, preventing its ubiquitination and degradation. Sumoylation negatively regulates transcriptional activity. Desumoylated specifically by SENP6. In terms of tissue distribution, expressed in macrophages (at protein level).

The protein localises to the nucleus. The protein resides in the cytoplasm. It localises to the mitochondrion. Functionally, receptor for retinoic acid that acts as a transcription factor. Forms homo- or heterodimers with retinoic acid receptors (RARs) and binds to target response elements in response to their ligands, all-trans or 9-cis retinoic acid, to regulate gene expression in various biological processes. The RAR/RXR heterodimers bind to the retinoic acid response elements (RARE) composed of tandem 5'-AGGTCA-3' sites known as DR1-DR5 to regulate transcription. The high affinity ligand for retinoid X receptors (RXRs) is 9-cis retinoic acid. In the absence of ligand, the RXR-RAR heterodimers associate with a multiprotein complex containing transcription corepressors that induce histone deacetylation, chromatin condensation and transcriptional suppression. On ligand binding, the corepressors dissociate from the receptors and coactivators are recruited leading to transcriptional activation. Serves as a common heterodimeric partner for a number of nuclear receptors, such as RARA, RARB and PPARA. The RXRA/RARB heterodimer can act as a transcriptional repressor or transcriptional activator, depending on the RARE DNA element context. The RXRA/PPARA heterodimer is required for PPARA transcriptional activity on fatty acid oxidation genes such as ACOX1 and the P450 system genes. Together with RARA, positively regulates microRNA-10a expression, thereby inhibiting the GATA6/VCAM1 signaling response to pulsatile shear stress in vascular endothelial cells. Acts as an enhancer of RARA binding to RARE DNA element. May facilitate the nuclear import of heterodimerization partners such as VDR and NR4A1. Promotes myelin debris phagocytosis and remyelination by macrophages. Plays a role in the attenuation of the innate immune system in response to viral infections, possibly by negatively regulating the transcription of antiviral genes such as type I IFN genes. Involved in the regulation of calcium signaling by repressing ITPR2 gene expression, thereby controlling cellular senescence. The protein is Retinoic acid receptor RXR-alpha (Rxra) of Mus musculus (Mouse).